The primary structure comprises 417 residues: Glutamyl-tRNA reductase (417 aa).

Substrate-binding positions include 48–51 (TCNR), Ser-100, 105–107 (EDQ), and Gln-111. Residue Cys-49 is the Nucleophile of the active site. 180–185 (GAGETG) lines the NADP(+) pocket.

This sequence belongs to the glutamyl-tRNA reductase family. As to quaternary structure, homodimer.

It carries out the reaction (S)-4-amino-5-oxopentanoate + tRNA(Glu) + NADP(+) = L-glutamyl-tRNA(Glu) + NADPH + H(+). It functions in the pathway porphyrin-containing compound metabolism; protoporphyrin-IX biosynthesis; 5-aminolevulinate from L-glutamyl-tRNA(Glu): step 1/2. Functionally, catalyzes the NADPH-dependent reduction of glutamyl-tRNA(Glu) to glutamate 1-semialdehyde (GSA). This Methanothrix thermoacetophila (strain DSM 6194 / JCM 14653 / NBRC 101360 / PT) (Methanosaeta thermophila) protein is Glutamyl-tRNA reductase.